Consider the following 664-residue polypeptide: Cyclic nucleotide-gated channel alpha-2 (664 aa).

Residues 1–10 (MMTEKSNGVK) are compositionally biased toward polar residues. The disordered stretch occupies residues 1 to 51 (MMTEKSNGVKSSPANNHNHHPPPSIKANGKDDHRAGSRPQSVAADDDTSPE). The Cytoplasmic segment spans residues 1 to 146 (MMTEKSNGVK…PAGDWYYRWL (146 aa)). The chain crosses the membrane as a helical span at residues 147–168 (FVIAMPVLYNWCLLVARACFSD). Residues 169–178 (LQRNYFVVWL) are Extracellular-facing. A helical membrane pass occupies residues 179–199 (VLDYFSDTVYIADLIIRLRTG). Topologically, residues 200 to 224 (FLEQGLLVKDPKKLRDNYIHTLQFK) are cytoplasmic. Residues 225 to 243 (LDVASIIPTDLIYFAVGIH) traverse the membrane as a helical segment. At 244 to 248 (SPEVR) the chain is on the extracellular side. Residues 249 to 267 (FNRLLHFARMFEFFDRTET) traverse the membrane as a helical segment. At 268–274 (RTSYPNI) the chain is on the cytoplasmic side. Positions 272–380 (PNIFRISNLV…GNVGSMISNM (109 aa)) are ion conduction pathway. A helical transmembrane segment spans residues 275 to 298 (FRISNLVLYILVIIHWNACIYYVI). Residues 299 to 321 (SKSIGFGVDTWVYPNITDPEYGY) lie on the Extracellular side of the membrane. The next 2 helical transmembrane spans lie at 322 to 356 (LARE…LFVI) and 357 to 381 (FDFL…SNMN). Residues 339–342 (TIGE) form a selectivity filter region. The C-linker stretch occupies residues 382 to 458 (ATRAEFQAKI…STLKKVRIFQ (77 aa)). Topologically, residues 382–664 (ATRAEFQAKI…INTPEPTAAE (283 aa)) are cytoplasmic. The segment at 462–582 (AGLLVELVLK…EERGREILMK (121 aa)) is cyclic nucleotide-binding domain. Residues glycine 522, serine 525, arginine 538, and threonine 539 each contribute to the 3',5'-cyclic GMP site. 3',5'-cyclic AMP-binding residues include arginine 538 and threonine 539. Residues 599-653 (VQEKLEQLETNMDTLYTRFARLLAEYTGAQQKLKQRITVLETKMKQNHEDDYLSD) are a coiled coil.

It belongs to the cyclic nucleotide-gated cation channel (TC 1.A.1.5) family. CNGA2 subfamily. As to quaternary structure, the olfactory cyclic nucleotide-gated channel is an heterotetramer composed of CNGA2, CNGA4 and CNGB1b subunits with 2:1:1 stoichiometry. In terms of tissue distribution, olfactory neurons. Widely expressed in brain, enriched in deep cerebellar nuclei, olfactory bulb mitral cells and cerebellar Purkinje neurons. Expressed in olfactory sensory cilia (at protein level).

Its subcellular location is the cell projection. The protein resides in the cilium membrane. It carries out the reaction Ca(2+)(in) = Ca(2+)(out). The enzyme catalyses Na(+)(in) = Na(+)(out). The catalysed reaction is K(+)(in) = K(+)(out). It catalyses the reaction NH4(+)(in) = NH4(+)(out). It carries out the reaction Rb(+)(in) = Rb(+)(out). The enzyme catalyses Li(+)(in) = Li(+)(out). The catalysed reaction is Cs(+)(in) = Cs(+)(out). With respect to regulation, the channel activity is inhibited by L-cis diltiazem. Pore-forming subunit of the olfactory cyclic nucleotide-gated channel. Operates in the cilia of olfactory sensory neurons where chemical stimulation of the odorant is converted to an electrical signal. Mediates odorant-induced cAMP-dependent Ca(2+) influx triggering neuron depolarization. The rise of intracellular Ca(2+) levels potentiates the olfactory response by activating Ca(2+)-dependent Cl(-) channels, but it also serves as a negative feedback signal to desensitize the channel for rapid adaptation to odorants. Conducts cAMP- and cGMP-gated ion currents, with permeability for monovalent and divalent cations. The protein is Cyclic nucleotide-gated channel alpha-2 of Rattus norvegicus (Rat).